The sequence spans 591 residues: Aspartate--tRNA ligase (591 aa).

Glu-174 is an L-aspartate binding site. Residues 198-201 (QLFK) are aspartate. An L-aspartate-binding site is contributed by Arg-220. Residues 220–222 (RDE) and Gln-229 each bind ATP. L-aspartate is bound at residue His-450. Glu-486 provides a ligand contact to ATP. Arg-493 is a binding site for L-aspartate. 538–541 (GLDR) contributes to the ATP binding site.

Belongs to the class-II aminoacyl-tRNA synthetase family. Type 1 subfamily. Homodimer.

The protein resides in the cytoplasm. It carries out the reaction tRNA(Asp) + L-aspartate + ATP = L-aspartyl-tRNA(Asp) + AMP + diphosphate. In terms of biological role, catalyzes the attachment of L-aspartate to tRNA(Asp) in a two-step reaction: L-aspartate is first activated by ATP to form Asp-AMP and then transferred to the acceptor end of tRNA(Asp). This Leuconostoc mesenteroides subsp. mesenteroides (strain ATCC 8293 / DSM 20343 / BCRC 11652 / CCM 1803 / JCM 6124 / NCDO 523 / NBRC 100496 / NCIMB 8023 / NCTC 12954 / NRRL B-1118 / 37Y) protein is Aspartate--tRNA ligase.